A 667-amino-acid chain; its full sequence is Fermitin family homolog 3 (667 aa).

The residue at position 8 (S8) is a Phosphoserine. Position 11 is a phosphotyrosine (Y11). One can recognise an FERM domain in the interval 229 to 558 (WLDSSRCLMQ…SLPDFGISYV (330 aa)). A PH domain is found at 354 to 457 (DHLRIFRIPR…WMAGCRLASK (104 aa)). Residue Y504 is modified to Phosphotyrosine. A Phosphothreonine modification is found at T591.

It belongs to the kindlin family. Interacts with ITGB1, ITGB2 and ITGB3 (via cytoplasmic tails). Highly expressed in lymph node. Expressed in thymus, spleen and leukocytes. Weakly expressed in placenta, small intestine, stomach, testis and lung. Overexpressed in B-cell malignancies.

It is found in the cell projection. The protein localises to the podosome. Plays a central role in cell adhesion in hematopoietic cells. Acts by activating the integrin beta-1-3 (ITGB1, ITGB2 and ITGB3). Required for integrin-mediated platelet adhesion and leukocyte adhesion to endothelial cells. Required for activation of integrin beta-2 (ITGB2) in polymorphonuclear granulocytes (PMNs). Functionally, isoform 2 may act as a repressor of NF-kappa-B and apoptosis. The chain is Fermitin family homolog 3 (FERMT3) from Homo sapiens (Human).